The sequence spans 195 residues: 2-cysteine peroxiredoxin, chloroplastic (195 aa).

The 159-residue stretch at 3–161 (IRVGQKAPDF…ALRTLQAIQY (159 aa)) folds into the Thioredoxin domain. C49 acts as the Cysteine sulfenic acid (-SOH) intermediate in catalysis.

The protein belongs to the peroxiredoxin family. AhpC/Prx1 subfamily. Homodimer; disulfide-linked, upon oxidation.

The protein localises to the plastid. Its subcellular location is the chloroplast. It catalyses the reaction a hydroperoxide + [thioredoxin]-dithiol = an alcohol + [thioredoxin]-disulfide + H2O. Functionally, thiol-specific peroxidase that catalyzes the reduction of hydrogen peroxide and organic hydroperoxides to water and alcohols, respectively. Plays a role in cell protection against oxidative stress by detoxifying peroxides. The sequence is that of 2-cysteine peroxiredoxin, chloroplastic from Chattonella marina var. antiqua (Red tide flagellate).